A 273-amino-acid polypeptide reads, in one-letter code: SPRY domain-containing SOCS box protein 1 (273 aa).

Residue Tyr31 is modified to Phosphotyrosine. The B30.2/SPRY domain maps to 33-231 (KPTRLDLLLD…IRMRYLNGLD (199 aa)). One can recognise an SOCS box domain in the interval 232 to 273 (PEPLPLMDLCRRSVRLALGKGRLGEIHALPLPASLKAYLLYQ).

It belongs to the SPSB family. As to quaternary structure, component of the probable ECS(SPSB1) E3 ubiquitin-protein ligase complex which contains CUL5, RNF7/RBX2, Elongin BC complex and SPSB1. Interacts with CUL5, RNF7, ELOB and ELOC. Directly interacts with MET tyrosine kinase domain in the presence and in the absence of HGF, however HGF treatment has a positive effect on this interaction. When phosphorylated, interacts with RASA1 without affecting its stability. Interacts (via B30.2/SPRY domain) with PAWR; this interaction is direct and occurs in association with the Elongin BC complex. Interacts with NOS2 and EPHB2.

The protein localises to the cytoplasm. It localises to the cytosol. It functions in the pathway protein modification; protein ubiquitination. Its function is as follows. Substrate recognition component of a SCF-like ECS (Elongin BC-CUL2/5-SOCS-box protein) E3 ubiquitin-protein ligase complex which mediates the ubiquitination and subsequent proteasomal degradation of target proteins. Negatively regulates nitric oxide (NO) production and limits cellular toxicity in activated macrophages by mediating the ubiquitination and proteasomal degradation of NOS2. Acts as a bridge which links NOS2 with the ECS E3 ubiquitin ligase complex components ELOC and CUL5. This chain is SPRY domain-containing SOCS box protein 1 (SPSB1), found in Bos taurus (Bovine).